Consider the following 124-residue polypeptide: NADPH-dependent 7-cyano-7-deazaguanine reductase (124 aa).

The active-site Thioimide intermediate is C40. D47 (proton donor) is an active-site residue. Residues 62–64 (VEL) and 81–82 (HE) each bind substrate.

Belongs to the GTP cyclohydrolase I family. QueF type 1 subfamily.

The protein localises to the cytoplasm. The catalysed reaction is 7-aminomethyl-7-carbaguanine + 2 NADP(+) = 7-cyano-7-deazaguanine + 2 NADPH + 3 H(+). Its pathway is tRNA modification; tRNA-queuosine biosynthesis. Catalyzes the NADPH-dependent reduction of 7-cyano-7-deazaguanine (preQ0) to 7-aminomethyl-7-deazaguanine (preQ1). This is NADPH-dependent 7-cyano-7-deazaguanine reductase from Wolinella succinogenes (strain ATCC 29543 / DSM 1740 / CCUG 13145 / JCM 31913 / LMG 7466 / NCTC 11488 / FDC 602W) (Vibrio succinogenes).